Consider the following 179-residue polypeptide: Large ribosomal subunit protein uL5 (179 aa).

The protein belongs to the universal ribosomal protein uL5 family. Part of the 50S ribosomal subunit; part of the 5S rRNA/L5/L18/L25 subcomplex. Contacts the 5S rRNA and the P site tRNA. Forms a bridge to the 30S subunit in the 70S ribosome.

This is one of the proteins that bind and probably mediate the attachment of the 5S RNA into the large ribosomal subunit, where it forms part of the central protuberance. In the 70S ribosome it contacts protein S13 of the 30S subunit (bridge B1b), connecting the 2 subunits; this bridge is implicated in subunit movement. Contacts the P site tRNA; the 5S rRNA and some of its associated proteins might help stabilize positioning of ribosome-bound tRNAs. This Mannheimia succiniciproducens (strain KCTC 0769BP / MBEL55E) protein is Large ribosomal subunit protein uL5.